A 379-amino-acid polypeptide reads, in one-letter code: Probable peptidoglycan glycosyltransferase FtsW (379 aa).

At 1–15 (MHKTEAQTYLLYDRT) the chain is on the cytoplasmic side. The helical transmembrane segment at 16–36 (LLLLTMGLVGIGLVMVISTSM) threads the bilayer. Topologically, residues 37–52 (PIGVRLSEDPFYFARR) are periplasmic. Residues 53 to 73 (YAFYLGLAVVLSLVTLGIPMA) traverse the membrane as a helical segment. Topologically, residues 74–79 (SWQRGS) are cytoplasmic. Residues 80–100 (SLILLITLIMLLLVLIAGQSV) traverse the membrane as a helical segment. Topologically, residues 101 to 113 (NGAVRWLALGPWR) are periplasmic. The chain crosses the membrane as a helical span at residues 114 to 133 (IQPAELSKLALFCYLASYLV). At 134–139 (RKAEEV) the chain is on the cytoplasmic side. The helical transmembrane segment at 140–162 (RTNFWGFCKPIGVMVLLAILLLA) threads the bilayer. Residues 163–165 (QPD) lie on the Periplasmic side of the membrane. A helical transmembrane segment spans residues 166-183 (LGTVLVLFITTLAMLFLA). The Cytoplasmic portion of the chain corresponds to 184 to 186 (EAK). A helical membrane pass occupies residues 187–207 (IWQFLPIIGTGILAVMLLIIA). The Periplasmic segment spans residues 208–269 (KPYRRRRVTS…TEAHTDFICS (62 aa)). Residues 270 to 290 (ILGEELGYFGVLLALLMVFLV) form a helical membrane-spanning segment. Over 291-301 (AFRAMSIGRKA) the chain is Cytoplasmic. The chain crosses the membrane as a helical span at residues 302 to 322 (LAINQIFSGFLACSIGIWFSF). Topologically, residues 323–342 (QTMVNVGAAAGMLPTKGLTL) are periplasmic. Residues 343–363 (PFISYGGSSMLIMLTAIVLLI) form a helical membrane-spanning segment. Residues 364 to 379 (RIDFETRLAKLQAFVR) lie on the Cytoplasmic side of the membrane.

Belongs to the SEDS family. FtsW subfamily.

It is found in the cell inner membrane. It carries out the reaction [GlcNAc-(1-&gt;4)-Mur2Ac(oyl-L-Ala-gamma-D-Glu-L-Lys-D-Ala-D-Ala)](n)-di-trans,octa-cis-undecaprenyl diphosphate + beta-D-GlcNAc-(1-&gt;4)-Mur2Ac(oyl-L-Ala-gamma-D-Glu-L-Lys-D-Ala-D-Ala)-di-trans,octa-cis-undecaprenyl diphosphate = [GlcNAc-(1-&gt;4)-Mur2Ac(oyl-L-Ala-gamma-D-Glu-L-Lys-D-Ala-D-Ala)](n+1)-di-trans,octa-cis-undecaprenyl diphosphate + di-trans,octa-cis-undecaprenyl diphosphate + H(+). It participates in cell wall biogenesis; peptidoglycan biosynthesis. Its function is as follows. Peptidoglycan polymerase that is essential for cell division. The protein is Probable peptidoglycan glycosyltransferase FtsW of Moranella endobia (strain PCIT).